A 229-amino-acid polypeptide reads, in one-letter code: Large ribosomal subunit protein uL3 (229 aa).

Residue Gln151 is modified to N5-methylglutamine.

Belongs to the universal ribosomal protein uL3 family. Part of the 50S ribosomal subunit. Forms a cluster with proteins L14 and L19. In terms of processing, methylated by PrmB.

Its function is as follows. One of the primary rRNA binding proteins, it binds directly near the 3'-end of the 23S rRNA, where it nucleates assembly of the 50S subunit. This Paramagnetospirillum magneticum (strain ATCC 700264 / AMB-1) (Magnetospirillum magneticum) protein is Large ribosomal subunit protein uL3.